The following is a 365-amino-acid chain: Eukaryotic translation initiation factor 3 subunit H (365 aa).

The MPN domain maps to 11–160 (VQVEALVVMK…LRAFRLSPQF (150 aa)). Positions 273 to 303 (YQRSLAREQTKIAAWQAKRKAENATRAQLKQ) form a coiled coil.

Belongs to the eIF-3 subunit H family. As to quaternary structure, component of the eukaryotic translation initiation factor 3 (eIF-3) complex.

The protein localises to the cytoplasm. Component of the eukaryotic translation initiation factor 3 (eIF-3) complex, which is involved in protein synthesis of a specialized repertoire of mRNAs and, together with other initiation factors, stimulates binding of mRNA and methionyl-tRNAi to the 40S ribosome. The eIF-3 complex specifically targets and initiates translation of a subset of mRNAs involved in cell proliferation. The sequence is that of Eukaryotic translation initiation factor 3 subunit H from Coccidioides immitis (strain RS) (Valley fever fungus).